The following is a 473-amino-acid chain: Cysteine--tRNA ligase (473 aa).

Position 28 (cysteine 28) interacts with Zn(2+). A 'HIGH' region motif is present at residues 30-40 (PTVYNMPHIGN). Cysteine 213, histidine 238, and glutamate 242 together coordinate Zn(2+). The short motif at 270–274 (KMSKS) is the 'KMSKS' region element. Residue lysine 273 coordinates ATP.

Belongs to the class-I aminoacyl-tRNA synthetase family. The cofactor is Zn(2+).

Its subcellular location is the cytoplasm. The enzyme catalyses tRNA(Cys) + L-cysteine + ATP = L-cysteinyl-tRNA(Cys) + AMP + diphosphate. In Methanosarcina mazei (strain ATCC BAA-159 / DSM 3647 / Goe1 / Go1 / JCM 11833 / OCM 88) (Methanosarcina frisia), this protein is Cysteine--tRNA ligase.